A 577-amino-acid chain; its full sequence is MPKTINVRVTTMDAELEFAIQPNTTGKQLFDQVVKTIGLREIWFFGLQYQDTKGFFTWLKLNKKVTAQDVRKESPLLFKFRAKFYPEDVSEELIQDITQRLFFLQVKEDILNDDIYCPPETAVLLASYAVQSKYGDFNKEVHKSGYLAGDRLLPQRVLEQHKLNKDQWEERIQVWHEEHRGMLREDAVLEYLKIAQDLEMYGVNYFSIKNKKGSELWLGVDALGLNIYEQNDRLTPKIGFPWSEIRNISFNDKKFVIKPIDKKAPDFVFYAPRLRINKRILALCMGNHELYMRRRKPDTIEVQQMKAQAREEKHQKQMERALLENEKKKREMAEKEKEKIEREKEELMERLKQIEEQTKKAQQELEEQTRRALELEQERKRAQSEAEKLAKERQEAEEAKEALLQASQDQKKTQEQLALEMAELTARISQLEMARQKKESEAVEWQQKAQMVQEDLEKTRAELKTAMSTPHVAEPAENEQDEQDENGAEASAELRADAMAKDRSEEERTTEAEKNERVQKHLKALTSELANARDESKKTANDMIHAENMRLGRDKYKTLRQIRQGNTKQRIDEFESM.

Residues 2 to 295 (PKTINVRVTT…GNHELYMRRR (294 aa)) enclose the FERM domain. Residue Ser74 is modified to Phosphoserine. The residue at position 79 (Lys79) is an N6-acetyllysine. Position 83 is an N6-succinyllysine (Lys83). Positions 115 to 120 (IYCPPE) match the [IL]-x-C-x-x-[DE] motif motif. Tyr116 bears the Phosphotyrosine mark. Cys117 bears the S-nitrosocysteine mark. N6-acetyllysine occurs at positions 139 and 165. The span at 375 to 401 (LEQERKRAQSEAEKLAKERQEAEEAKE) shows a compositional bias: basic and acidic residues. Disordered regions lie at residues 375–409 (LEQE…ASQD) and 466–518 (AMST…NERV). Position 407 is a phosphoserine (Ser407). Acidic residues predominate over residues 476–487 (AENEQDEQDENG). Positions 492–518 (AELRADAMAKDRSEEERTTEAEKNERV) are enriched in basic and acidic residues. Ser527 carries the post-translational modification Phosphoserine. A Phosphothreonine; by ROCK2 and STK10 modification is found at Thr558.

In resting T-cells, part of a PAG1-NHERF1-MSN complex which is disrupted upon TCR activation. Interacts with NHERF1. Interacts with PPP1R16B. Interacts with PDZD8. Interacts with SELPLG and SYK; these interactions mediate the activation of SYK by SELPLG. Interacts with PDPN (via cytoplasmic domain); this interaction activates RHOA and promotes epithelial-mesenchymal transition. Interacts with SPN/CD43 cytoplasmic tail. Interacts with CD44. Interacts with ICAM2. Interacts with ICAM3 (via C-terminus). Interacts with PDZD8. Interacts with F-actin. Interacts with CD46. Interacts with PTPN6. In terms of processing, phosphorylation on Thr-558 is crucial for the formation of microvilli-like structures. Phosphorylation by ROCK2 suppresses the head-to-tail association of the N-terminal and C-terminal halves resulting in an opened conformation which is capable of actin and membrane-binding. Phosphorylation on Thr-558 by STK10 negatively regulates lymphocyte migration and polarization. S-nitrosylation of Cys-117 is induced by interferon-gamma and oxidatively-modified low-densitity lipoprotein (LDL(ox)) implicating the iNOS-S100A8/9 transnitrosylase complex.

The protein resides in the cell membrane. The protein localises to the cytoplasm. Its subcellular location is the cytoskeleton. It is found in the apical cell membrane. It localises to the cell projection. The protein resides in the microvillus membrane. The protein localises to the microvillus. Its activity is regulated as follows. A head-to-tail association, of the N-terminal and C-terminal halves results in a closed conformation (inactive form) which is incapable of actin or membrane-binding. Ezrin-radixin-moesin (ERM) family protein that connects the actin cytoskeleton to the plasma membrane and thereby regulates the structure and function of specific domains of the cell cortex. Tethers actin filaments by oscillating between a resting and an activated state providing transient interactions between moesin and the actin cytoskeleton. Once phosphorylated on its C-terminal threonine, moesin is activated leading to interaction with F-actin and cytoskeletal rearrangement. These rearrangements regulate many cellular processes, including cell shape determination, membrane transport, and signal transduction. The role of moesin is particularly important in immunity acting on both T and B-cells homeostasis and self-tolerance, regulating lymphocyte egress from lymphoid organs. Modulates phagolysosomal biogenesis in macrophages. Participates also in immunologic synapse formation. This Bos taurus (Bovine) protein is Moesin.